Consider the following 183-residue polypeptide: Large ribosomal subunit protein bL32m (183 aa).

Cysteine 99, cysteine 102, cysteine 112, and cysteine 115 together coordinate Zn(2+).

It belongs to the bacterial ribosomal protein bL32 family. As to quaternary structure, component of the mitochondrial large ribosomal subunit (mt-LSU).

It localises to the mitochondrion. Component of the mitochondrial large ribosomal subunit (mt-LSU). The mitochondrial ribosome (mitoribosome) is a large ribonucleoprotein complex responsible for the synthesis of proteins inside mitochondria. In Caenorhabditis elegans, this protein is Large ribosomal subunit protein bL32m (mrpl-32).